Here is a 245-residue protein sequence, read N- to C-terminus: Biosynthetic peptidoglycan transglycosylase (245 aa).

A helical transmembrane segment spans residues 20–42; it reads VYAGSVFAGAWLATQLFYLAQIA.

It belongs to the glycosyltransferase 51 family.

It is found in the cell inner membrane. The catalysed reaction is [GlcNAc-(1-&gt;4)-Mur2Ac(oyl-L-Ala-gamma-D-Glu-L-Lys-D-Ala-D-Ala)](n)-di-trans,octa-cis-undecaprenyl diphosphate + beta-D-GlcNAc-(1-&gt;4)-Mur2Ac(oyl-L-Ala-gamma-D-Glu-L-Lys-D-Ala-D-Ala)-di-trans,octa-cis-undecaprenyl diphosphate = [GlcNAc-(1-&gt;4)-Mur2Ac(oyl-L-Ala-gamma-D-Glu-L-Lys-D-Ala-D-Ala)](n+1)-di-trans,octa-cis-undecaprenyl diphosphate + di-trans,octa-cis-undecaprenyl diphosphate + H(+). It participates in cell wall biogenesis; peptidoglycan biosynthesis. In terms of biological role, peptidoglycan polymerase that catalyzes glycan chain elongation from lipid-linked precursors. This Burkholderia lata (strain ATCC 17760 / DSM 23089 / LMG 22485 / NCIMB 9086 / R18194 / 383) protein is Biosynthetic peptidoglycan transglycosylase.